We begin with the raw amino-acid sequence, 353 residues long: Photosystem II D2 protein (353 aa).

Residue Thr2 is modified to N-acetylthreonine. Thr2 is subject to Phosphothreonine. A helical membrane pass occupies residues 41 to 61; that stretch reads CAYFALGGWFTGTTFVTSWYT. Position 118 (His118) interacts with chlorophyll a. The helical transmembrane segment at 125-141 threads the bilayer; it reads GFMLRQFELARSVQLRP. Gln130 and Asn143 together coordinate pheophytin a. The chain crosses the membrane as a helical span at residues 153–166; sequence VFVSVFLIYPLGQS. His198 serves as a coordination point for chlorophyll a. Residues 208–228 form a helical membrane-spanning segment; sequence AALLCAIHGATVENTLFEDGD. Residues His215 and Phe262 each contribute to the a plastoquinone site. His215 serves as a coordination point for Fe cation. His269 provides a ligand contact to Fe cation. A helical membrane pass occupies residues 279–295; sequence GLWMSALGVVGLALNLR.

The protein belongs to the reaction center PufL/M/PsbA/D family. In terms of assembly, PSII is composed of 1 copy each of membrane proteins PsbA, PsbB, PsbC, PsbD, PsbE, PsbF, PsbH, PsbI, PsbJ, PsbK, PsbL, PsbM, PsbT, PsbX, PsbY, PsbZ, Psb30/Ycf12, at least 3 peripheral proteins of the oxygen-evolving complex and a large number of cofactors. It forms dimeric complexes. The cofactor is The D1/D2 heterodimer binds P680, chlorophylls that are the primary electron donor of PSII, and subsequent electron acceptors. It shares a non-heme iron and each subunit binds pheophytin, quinone, additional chlorophylls, carotenoids and lipids. There is also a Cl(-1) ion associated with D1 and D2, which is required for oxygen evolution. The PSII complex binds additional chlorophylls, carotenoids and specific lipids..

It localises to the plastid. The protein localises to the chloroplast thylakoid membrane. It carries out the reaction 2 a plastoquinone + 4 hnu + 2 H2O = 2 a plastoquinol + O2. Functionally, photosystem II (PSII) is a light-driven water:plastoquinone oxidoreductase that uses light energy to abstract electrons from H(2)O, generating O(2) and a proton gradient subsequently used for ATP formation. It consists of a core antenna complex that captures photons, and an electron transfer chain that converts photonic excitation into a charge separation. The D1/D2 (PsbA/PsbD) reaction center heterodimer binds P680, the primary electron donor of PSII as well as several subsequent electron acceptors. D2 is needed for assembly of a stable PSII complex. This Amborella trichopoda protein is Photosystem II D2 protein.